The following is a 421-amino-acid chain: Non-homologous end-joining factor LIF1 (421 aa).

Residues 1-196 (MSQLTEFISC…VEQLAREREL (196 aa)) form an interaction with NEJ1 region. Residues 365–421 (GIQISAGRSDEDYGDISGSESETDASAGEKKSSNHSEQSGNDREPCLQTESETDIET) are disordered. Residues 391–409 (AGEKKSSNHSEQSGNDREP) show a composition bias toward basic and acidic residues.

Belongs to the XRCC4-XLF family. XLF subfamily. As to quaternary structure, interacts with DNL4 (via BRCT domain). Interacts (via N-terminus) with NEJ1 (via C-terminus); the interaction is direct. The DNL4-LIF1 complex interacts with POL4.

The protein resides in the cytoplasm. The protein localises to the nucleus. In terms of biological role, involved in non-homologous repair of DNA double-strand breaks. Stabilizes DNL4. This chain is Non-homologous end-joining factor LIF1 (LIF1), found in Saccharomyces cerevisiae (strain ATCC 204508 / S288c) (Baker's yeast).